The following is a 562-amino-acid chain: Solute carrier family 40 member 1 (562 aa).

Over 1–20 (MDSPASKKPRCERFREFFKS) the chain is Cytoplasmic. Residues 21 to 50 (AKFLIYVGHALSTWGDRMWNFAVAVFLVEL) form a helical membrane-spanning segment. D36 contacts Fe cation. Residues 51 to 54 (YGNS) are Extracellular-facing. Residues 55–81 (LLLTAVYGLVVAGSVLLLGAIIGDWVD) form a helical membrane-spanning segment. Residues 82-84 (KNP) are Cytoplasmic-facing. The chain crosses the membrane as a helical span at residues 85-115 (RLKVAQTSLVVQNSAVILCGALLMAVFQFKQ). Over 116–123 (QLSSMYDG) the chain is Extracellular. The chain crosses the membrane as a helical span at residues 124–159 (WLLTTCYIMVISIANIANLASTAMSITIQRDWVVVV). At 160–161 (AG) the chain is on the cytoplasmic side. The chain crosses the membrane as a helical span at residues 162–192 (DDRSKLADMNATVRIIDQLTNILAPMLVGQI). Residues 193 to 199 (MAFGSHF) lie on the Extracellular side of the membrane. Residues 200–226 (IGCGFISGWNLFSMCLEYFLLWKVYQK) traverse the membrane as a helical segment. Over 227-300 (TPALAFKAGQ…DGWVAYYNQS (74 aa)) the chain is Cytoplasmic. Residues 301 to 327 (IFFAGMSLAFLYMTVLGFDCITTGYAY) form a helical membrane-spanning segment. Residue C320 coordinates Fe cation. Topologically, residues 328–332 (TQGLN) are extracellular. Residues 333-360 (GSVLSLLMGASAVSGICGTVAFTWIRKK) traverse the membrane as a helical segment. The Cytoplasmic portion of the chain corresponds to 361–362 (CG). A helical transmembrane segment spans residues 363–385 (LIRTGFIAGVTQLSCLTLCVASV). The Extracellular portion of the chain corresponds to 386 to 444 (FAPGSPFDLSVSPFEEVLRHLFGDSGSLRESPTFIPTTEPPIQANVTVFEEAPPVESYM). The helical transmembrane segment at 445 to 474 (SVGLLFAGVIAARVGLWSFDLTVTQLIQEN) threads the bilayer. Topologically, residues 475–479 (VIESE) are cytoplasmic. The helical transmembrane segment at 480 to 504 (RGVINGVQNSMNYLLDLLHFIMVIL) threads the bilayer. H498 contributes to the Fe cation binding site. Topologically, residues 505–507 (APN) are extracellular. The helical transmembrane segment at 508–533 (PEAFGLLVIISVSFVAMGHMMYFRFA) threads the bilayer. Topologically, residues 534–562 (YKSLGSRLFLFCSPEQKPDPNIPSLPNSV) are cytoplasmic.

Belongs to the ferroportin (FP) (TC 2.A.100) family. SLC40A subfamily. In terms of tissue distribution, expressed in the yolk sac and placenta.

It localises to the cell membrane. The protein localises to the basolateral cell membrane. The enzyme catalyses Fe(2+)(in) = Fe(2+)(out). Its function is as follows. Transports Fe(2+) from the inside of a cell to the outside of the cell, playing a key role for maintaining systemic iron homeostasis. May be involved in transfer of Fe(2+) between maternal and fetal circulation. This Danio rerio (Zebrafish) protein is Solute carrier family 40 member 1 (slc40a1).